A 288-amino-acid polypeptide reads, in one-letter code: Probable branched-chain-amino-acid aminotransferase (288 aa).

An N6-(pyridoxal phosphate)lysine modification is found at K153.

The protein belongs to the class-IV pyridoxal-phosphate-dependent aminotransferase family. It depends on pyridoxal 5'-phosphate as a cofactor.

It catalyses the reaction L-leucine + 2-oxoglutarate = 4-methyl-2-oxopentanoate + L-glutamate. The catalysed reaction is L-isoleucine + 2-oxoglutarate = (S)-3-methyl-2-oxopentanoate + L-glutamate. It carries out the reaction L-valine + 2-oxoglutarate = 3-methyl-2-oxobutanoate + L-glutamate. It functions in the pathway amino-acid biosynthesis; L-isoleucine biosynthesis; L-isoleucine from 2-oxobutanoate: step 4/4. Its pathway is amino-acid biosynthesis; L-leucine biosynthesis; L-leucine from 3-methyl-2-oxobutanoate: step 4/4. It participates in amino-acid biosynthesis; L-valine biosynthesis; L-valine from pyruvate: step 4/4. In terms of biological role, acts on leucine, isoleucine and valine. The protein is Probable branched-chain-amino-acid aminotransferase (ilvE) of Rickettsia typhi (strain ATCC VR-144 / Wilmington).